A 479-amino-acid polypeptide reads, in one-letter code: tRNA-2-methylthio-N(6)-dimethylallyladenosine synthase (479 aa).

The MTTase N-terminal domain occupies 3–120 (KKLYIKTWGC…LPEMVNQVSE (118 aa)). 6 residues coordinate [4Fe-4S] cluster: Cys12, Cys49, Cys83, Cys157, Cys161, and Cys164. A Radical SAM core domain is found at 143–375 (KADGASAFVS…QQRLNQQSMA (233 aa)). Residues 378–441 (RRMLETEQRI…PNSLRGELIR (64 aa)) form the TRAM domain.

It belongs to the methylthiotransferase family. MiaB subfamily. As to quaternary structure, monomer. The cofactor is [4Fe-4S] cluster.

The protein resides in the cytoplasm. The enzyme catalyses N(6)-dimethylallyladenosine(37) in tRNA + (sulfur carrier)-SH + AH2 + 2 S-adenosyl-L-methionine = 2-methylsulfanyl-N(6)-dimethylallyladenosine(37) in tRNA + (sulfur carrier)-H + 5'-deoxyadenosine + L-methionine + A + S-adenosyl-L-homocysteine + 2 H(+). Functionally, catalyzes the methylthiolation of N6-(dimethylallyl)adenosine (i(6)A), leading to the formation of 2-methylthio-N6-(dimethylallyl)adenosine (ms(2)i(6)A) at position 37 in tRNAs that read codons beginning with uridine. The chain is tRNA-2-methylthio-N(6)-dimethylallyladenosine synthase from Idiomarina loihiensis (strain ATCC BAA-735 / DSM 15497 / L2-TR).